A 157-amino-acid polypeptide reads, in one-letter code: Crossover junction endodeoxyribonuclease RuvC (157 aa).

Catalysis depends on residues aspartate 7, glutamate 66, and aspartate 139. Residues aspartate 7, glutamate 66, and aspartate 139 each contribute to the Mg(2+) site.

This sequence belongs to the RuvC family. In terms of assembly, homodimer which binds Holliday junction (HJ) DNA. The HJ becomes 2-fold symmetrical on binding to RuvC with unstacked arms; it has a different conformation from HJ DNA in complex with RuvA. In the full resolvosome a probable DNA-RuvA(4)-RuvB(12)-RuvC(2) complex forms which resolves the HJ. Requires Mg(2+) as cofactor.

The protein localises to the cytoplasm. The catalysed reaction is Endonucleolytic cleavage at a junction such as a reciprocal single-stranded crossover between two homologous DNA duplexes (Holliday junction).. Its function is as follows. The RuvA-RuvB-RuvC complex processes Holliday junction (HJ) DNA during genetic recombination and DNA repair. Endonuclease that resolves HJ intermediates. Cleaves cruciform DNA by making single-stranded nicks across the HJ at symmetrical positions within the homologous arms, yielding a 5'-phosphate and a 3'-hydroxyl group; requires a central core of homology in the junction. The consensus cleavage sequence is 5'-(A/T)TT(C/G)-3'. Cleavage occurs on the 3'-side of the TT dinucleotide at the point of strand exchange. HJ branch migration catalyzed by RuvA-RuvB allows RuvC to scan DNA until it finds its consensus sequence, where it cleaves and resolves the cruciform DNA. In Helicobacter acinonychis (strain Sheeba), this protein is Crossover junction endodeoxyribonuclease RuvC.